The primary structure comprises 120 residues: Large ribosomal subunit protein uL18 (120 aa).

This sequence belongs to the universal ribosomal protein uL18 family. As to quaternary structure, part of the 50S ribosomal subunit; part of the 5S rRNA/L5/L18/L25 subcomplex. Contacts the 5S and 23S rRNAs.

In terms of biological role, this is one of the proteins that bind and probably mediate the attachment of the 5S RNA into the large ribosomal subunit, where it forms part of the central protuberance. The sequence is that of Large ribosomal subunit protein uL18 from Picosynechococcus sp. (strain ATCC 27264 / PCC 7002 / PR-6) (Agmenellum quadruplicatum).